Consider the following 408-residue polypeptide: Phosphoglycerate kinase (408 aa).

Residues 22–24, Arg39, 60–63, Arg117, and Arg157 contribute to the substrate site; these read DIN and HQSR. Residues Glu332 and 358 to 361 each bind ATP; that span reads GGHT.

The protein belongs to the phosphoglycerate kinase family. Monomer.

The protein resides in the cytoplasm. It catalyses the reaction (2R)-3-phosphoglycerate + ATP = (2R)-3-phospho-glyceroyl phosphate + ADP. Its pathway is carbohydrate degradation; glycolysis; pyruvate from D-glyceraldehyde 3-phosphate: step 2/5. This Thermoplasma acidophilum (strain ATCC 25905 / DSM 1728 / JCM 9062 / NBRC 15155 / AMRC-C165) protein is Phosphoglycerate kinase (pgk).